A 598-amino-acid polypeptide reads, in one-letter code: uncharacterized protein (598 aa).

One can recognise an ABC transmembrane type-1 domain in the interval 39-322; the sequence is LIMVFVFVTV…LSNQFNMIQM (284 aa). 5 helical membrane-spanning segments follow: residues 40-60, 80-100, 150-170, 177-197, and 273-293; these read IMVFVFVTVSSILGVLSPYLI, MLILGTIYALTSLLFWLQGKI, VLGNSIIQFFSGIVTLAGAVI, VILSLVTLSIVPLTVLITQIV, and LGFALISGFGGWLALKDIITV. Residues 355–589 form the ABC transporter domain; sequence IEFKNVWFSY…RGFYYELFTS (235 aa). Residue 388–395 participates in ATP binding; it reads GPTGSGKT.

Belongs to the ABC transporter superfamily.

It is found in the cell membrane. This is an uncharacterized protein from Thermotoga maritima (strain ATCC 43589 / DSM 3109 / JCM 10099 / NBRC 100826 / MSB8).